The following is a 286-amino-acid chain: Bifunctional protein FolD (286 aa).

Residues G166 to S168, S191, and I232 each bind NADP(+).

Belongs to the tetrahydrofolate dehydrogenase/cyclohydrolase family. In terms of assembly, homodimer.

It catalyses the reaction (6R)-5,10-methylene-5,6,7,8-tetrahydrofolate + NADP(+) = (6R)-5,10-methenyltetrahydrofolate + NADPH. The enzyme catalyses (6R)-5,10-methenyltetrahydrofolate + H2O = (6R)-10-formyltetrahydrofolate + H(+). It participates in one-carbon metabolism; tetrahydrofolate interconversion. Catalyzes the oxidation of 5,10-methylenetetrahydrofolate to 5,10-methenyltetrahydrofolate and then the hydrolysis of 5,10-methenyltetrahydrofolate to 10-formyltetrahydrofolate. The protein is Bifunctional protein FolD of Herpetosiphon aurantiacus (strain ATCC 23779 / DSM 785 / 114-95).